The primary structure comprises 485 residues: Adenosylhomocysteinase (485 aa).

Substrate contacts are provided by Thr60, Asp146, and Glu208. 209 to 211 (TTT) contacts NAD(+). Residues Lys238 and Asp242 each coordinate substrate. NAD(+)-binding positions include Asn243, 272–277 (GYGDVG), Glu295, Asn330, 351–353 (IGH), and Asn399.

Belongs to the adenosylhomocysteinase family. Requires NAD(+) as cofactor.

It is found in the cytoplasm. It carries out the reaction S-adenosyl-L-homocysteine + H2O = L-homocysteine + adenosine. It functions in the pathway amino-acid biosynthesis; L-homocysteine biosynthesis; L-homocysteine from S-adenosyl-L-homocysteine: step 1/1. Its function is as follows. May play a key role in the regulation of the intracellular concentration of adenosylhomocysteine. This Streptomyces coelicolor (strain ATCC BAA-471 / A3(2) / M145) protein is Adenosylhomocysteinase.